Here is a 393-residue protein sequence, read N- to C-terminus: Putative odorant receptor 69a, isoform B (393 aa).

Residues 1–39 (MQLEDFMRYPDLVCQAAQLPRYTWNGRRSLEVKRNLAKR) are Cytoplasmic-facing. Residues 40-60 (IIFWLGAVNLVYHNIGCVMYG) traverse the membrane as a helical segment. The Extracellular portion of the chain corresponds to 61–69 (YFGDGRTKD). The chain crosses the membrane as a helical span at residues 70–90 (PIAYLAELASVASMLGFTIVG). Over 91 to 138 (TLNLWKMLSLKTHFENLLNEFEELFQLIKHRAYRIHHYQEKYTRHIRN) the chain is Cytoplasmic. Residues 139–159 (TFIFHTSAVVYYNSLPILLMI) form a helical membrane-spanning segment. Over 160-208 (REHFSNSQQLGYRIQSNTWYPWQVQGSIPGFFAAVACQIFSCQTNMCVN) the chain is Extracellular. A helical transmembrane segment spans residues 209–229 (MFIQFLINFFGIQLEIHFDGL). At 230–269 (ARQLETIDARNPHAKDQLKYLIVYHTKLLNLADRVNRSFN) the chain is on the cytoplasmic side. Residues 270–290 (FTFLISLSVSMISNCFLAFSM) traverse the membrane as a helical segment. Topologically, residues 291-305 (TMFDFGTSLKHLLGL) are extracellular. The helical transmembrane segment at 306-326 (LLFITYNFSMCRSGTHLILTS) threads the bilayer. The Cytoplasmic segment spans residues 327-365 (GKVLPAAFYNNWYEGDLVYRRMLLILMMRATKPYMWKTY). Residues 366-386 (KLAPVSITTYMATLKFSYQMF) traverse the membrane as a helical segment. The Extracellular segment spans residues 387–393 (TCVRSLK).

This sequence belongs to the insect chemoreceptor superfamily. Heteromeric odorant receptor channel (TC 1.A.69) family. Or49a subfamily. As to quaternary structure, interacts with Orco. Complexes exist early in the endomembrane system in olfactory sensory neurons (OSNs), coupling these complexes to the conserved ciliary trafficking pathway. Expressed in olfactory sensory neurons in the antenna.

The protein resides in the cell membrane. Its function is as follows. Odorant receptor which mediates acceptance or avoidance behavior, depending on its substrates. The odorant receptor repertoire encodes a large collection of odor stimuli that vary widely in identity, intensity, and duration. May form a complex with Orco to form odorant-sensing units, providing sensitive and prolonged odorant signaling and calcium permeability. In Drosophila melanogaster (Fruit fly), this protein is Putative odorant receptor 69a, isoform B (Or69a).